The sequence spans 135 residues: RxLR effector protein Avr10 (135 aa).

The N-terminal stretch at M1–A19 is a signal peptide. Residues G34–K43 are compositionally biased toward polar residues. Residues G34 to A64 are disordered. The RxLR-dEER motif lies at R44–R63. The segment covering L46–A55 has biased composition (basic and acidic residues).

This sequence belongs to the RxLR effector family.

Its subcellular location is the secreted. The protein resides in the host nucleus. It localises to the host cytoplasm. Its function is as follows. Secreted effector that acts as an elicitor of hypersensitive response (HR) specifically on plants carrying defense protein R10. Enhances P.infestans colonization of Nicotiana benthamiana leaves. In Phytophthora infestans (strain T30-4) (Potato late blight agent), this protein is RxLR effector protein Avr10.